The primary structure comprises 223 residues: Putative 3-methyladenine DNA glycosylase (223 aa).

Belongs to the DNA glycosylase MPG family.

This chain is Putative 3-methyladenine DNA glycosylase, found in Pseudomonas syringae pv. syringae (strain B728a).